The chain runs to 388 residues: Probable pectin lyase F-1 (388 aa).

Positions 1–19 are cleaved as a signal peptide; that stretch reads MKTATFSTLLALSASAVNA. A disulfide bridge links Cys-80 with Cys-103. Asn-126 carries an N-linked (GlcNAc...) asparagine glycan. Residue Arg-253 is part of the active site. The cysteines at positions 328 and 336 are disulfide-linked.

Belongs to the polysaccharide lyase 1 family.

Its subcellular location is the secreted. The catalysed reaction is Eliminative cleavage of (1-&gt;4)-alpha-D-galacturonan methyl ester to give oligosaccharides with 4-deoxy-6-O-methyl-alpha-D-galact-4-enuronosyl groups at their non-reducing ends.. Pectinolytic enzymes consist of four classes of enzymes: pectin lyase, polygalacturonase, pectin methylesterase and rhamnogalacturonase. Among pectinolytic enzymes, pectin lyase is the most important in depolymerization of pectin, since it cleaves internal glycosidic bonds of highly methylated pectins. This is Probable pectin lyase F-1 (pelF-1) from Aspergillus terreus (strain NIH 2624 / FGSC A1156).